The primary structure comprises 461 residues: ADP-specific phosphofructokinase (461 aa).

Residues 1–457 enclose the ADPK domain; sequence MVRELLEKAR…FTSYLAMLKE (457 aa). The Mg(2+) site is built by Glu268, Glu298, and Asp441. Catalysis depends on Asp441, which acts as the Proton acceptor.

The protein belongs to the carbohydrate kinase PfkC family. It depends on Mg(2+) as a cofactor.

It localises to the cytoplasm. It carries out the reaction beta-D-fructose 6-phosphate + ADP = beta-D-fructose 1,6-bisphosphate + AMP + H(+). The protein operates within carbohydrate degradation; glycolysis. Functionally, catalyzes the phosphorylation of fructose 6-phosphate to fructose 1,6-bisphosphate using ADP as the phosphate donor. This chain is ADP-specific phosphofructokinase, found in Thermococcus kodakarensis (strain ATCC BAA-918 / JCM 12380 / KOD1) (Pyrococcus kodakaraensis (strain KOD1)).